We begin with the raw amino-acid sequence, 200 residues long: MDIIFASNNYHKFIEMESILKPHQITLLKDFQIDEKEIIESGLTFEANAQIKARAFAKRFNQVAIADDSGIIIEAISPLPGIYSKRYSGLGDTVNNIKVLDVLKNKENRQARFVCAIAIAFPDGKIFTYVGNMLGNIALNLKGSMGFGYDPIFIPDGKQETLGELGSTYKDEHSHRRHALNNFLEAKDEIIDYWRYTWKK.

7-12 serves as a coordination point for substrate; it reads SNNYHK. Asp68 (proton acceptor) is an active-site residue. Residue Asp68 coordinates Mg(2+). Residues Ser69, 147–150, Lys170, and 175–176 contribute to the substrate site; these read FGYD and HR.

This sequence belongs to the HAM1 NTPase family. As to quaternary structure, homodimer. The cofactor is Mg(2+).

It carries out the reaction XTP + H2O = XMP + diphosphate + H(+). The enzyme catalyses dITP + H2O = dIMP + diphosphate + H(+). The catalysed reaction is ITP + H2O = IMP + diphosphate + H(+). Functionally, pyrophosphatase that catalyzes the hydrolysis of nucleoside triphosphates to their monophosphate derivatives, with a high preference for the non-canonical purine nucleotides XTP (xanthosine triphosphate), dITP (deoxyinosine triphosphate) and ITP. Seems to function as a house-cleaning enzyme that removes non-canonical purine nucleotides from the nucleotide pool, thus preventing their incorporation into DNA/RNA and avoiding chromosomal lesions. The chain is dITP/XTP pyrophosphatase from Acholeplasma laidlawii (strain PG-8A).